A 164-amino-acid chain; its full sequence is Transcription elongation factor GreA (164 aa).

Residues 50-76 adopt a coiled-coil conformation; sequence YHAAREEQGQQEARIRQLQELLNNAKV.

The protein belongs to the GreA/GreB family.

Its function is as follows. Necessary for efficient RNA polymerase transcription elongation past template-encoded arresting sites. The arresting sites in DNA have the property of trapping a certain fraction of elongating RNA polymerases that pass through, resulting in locked ternary complexes. Cleavage of the nascent transcript by cleavage factors such as GreA or GreB allows the resumption of elongation from the new 3'terminus. GreA releases sequences of 2 to 3 nucleotides. In Mycolicibacterium smegmatis (strain ATCC 700084 / mc(2)155) (Mycobacterium smegmatis), this protein is Transcription elongation factor GreA.